The primary structure comprises 445 residues: Glutamyl-tRNA(Gln) amidotransferase subunit D (445 aa).

In terms of domain architecture, Asparaginase/glutaminase spans 93–425 (SEIKIISTGG…EKIRSLMISN (333 aa)). Active-site residues include Thr-103, Thr-179, Asp-180, and Lys-258.

The protein belongs to the asparaginase 1 family. GatD subfamily. Heterodimer of GatD and GatE.

The catalysed reaction is L-glutamyl-tRNA(Gln) + L-glutamine + ATP + H2O = L-glutaminyl-tRNA(Gln) + L-glutamate + ADP + phosphate + H(+). In terms of biological role, allows the formation of correctly charged Gln-tRNA(Gln) through the transamidation of misacylated Glu-tRNA(Gln) in organisms which lack glutaminyl-tRNA synthetase. The reaction takes place in the presence of glutamine and ATP through an activated gamma-phospho-Glu-tRNA(Gln). The GatDE system is specific for glutamate and does not act on aspartate. The chain is Glutamyl-tRNA(Gln) amidotransferase subunit D from Saccharolobus islandicus (strain M.16.27) (Sulfolobus islandicus).